We begin with the raw amino-acid sequence, 346 residues long: Histone H1.8 (346 aa).

2 stretches are compositionally biased toward low complexity: residues M1–S23 and P38–V48. 2 disordered regions span residues M1–R50 and A121–A346. Residues R51 to P129 form the H15 domain. Basic residues predominate over residues V128 to P137. The segment covering R148–P167 has biased composition (basic and acidic residues). The Nuclear localization signal signature appears at K164 to R179. Residues K172–K182 show a composition bias toward basic residues. Basic and acidic residues-rich tracts occupy residues K205 to M225 and E251 to S262. The segment covering T278 to A288 has biased composition (basic residues). Positions K298–K309 are enriched in low complexity. The segment covering A334–A346 has biased composition (polar residues).

This sequence belongs to the histone H1/H5 family. Oocyte-specific.

The protein resides in the cytoplasm. The protein localises to the nucleus. It is found in the chromosome. In terms of biological role, may play a key role in the control of gene expression during oogenesis and early embryogenesis, presumably through the perturbation of chromatin structure. Essential for meiotic maturation of germinal vesicle-stage oocytes. The somatic type linker histone H1c is rapidly replaced by H1oo in a donor nucleus transplanted into an oocyte. The greater mobility of H1oo as compared to H1c may contribute to this rapid replacement and increased instability of the embryonic chromatin structure. The rapid replacement of H1c with H1oo may play an important role in nuclear remodeling. The sequence is that of Histone H1.8 from Homo sapiens (Human).